The following is a 940-amino-acid chain: Acetyl-coenzyme A synthetase (940 aa).

Residues 1–33 (MCCAIWSASRAPACSASQLSSSHAVRPSVVPDA) form the signal peptide. Residues 1 to 289 (MCCAIWSASR…VQRSVTRLTA (289 aa)) form a unknown region. Disordered regions lie at residues 70–127 (TARA…RPRC), 157–202 (VAPP…ADSA), and 224–274 (ASSQ…QQTC). Composition is skewed to polar residues over residues 72–95 (RATTPSAVPNGASVSNSPCATAAS) and 107–120 (SSISNSRRGPTSGS). 2 stretches are compositionally biased toward low complexity: residues 184-202 (TAPPSSTADARAPRSADSA) and 224-245 (ASSQAAATPGSSNSGARGSGRS). Positions 258–274 (SSPTVQRNQTTVHQQTC) are enriched in polar residues. Residues 290–940 (MSNPSHAEVP…SVFEAIRASK (651 aa)) form an acetyl-coenzyme A synthetase region. Residues 480–483 (RRGK) and Thr599 contribute to the CoA site. Residues 675 to 677 (GEP), 699 to 704 (DTWWQT), Asp796, and Arg811 each bind ATP. Ser819 contacts CoA. Arg822 is a binding site for ATP. Val833, His835, and Val838 together coordinate Mg(2+). Residue Lys906 is modified to N6-acetyllysine.

It belongs to the ATP-dependent AMP-binding enzyme family. Mg(2+) serves as cofactor. Post-translationally, acetylated on Lys-906 by Pat in the presence of acetyl-CoA as an acetyl donor and ATP. Acetylation results in the inactivation of the enzyme. Deacetylation by the SIR2-homolog deacetylase CobB is required to activate the enzyme.

The enzyme catalyses acetate + ATP + CoA = acetyl-CoA + AMP + diphosphate. Its function is as follows. Catalyzes the conversion of acetate into acetyl-CoA (AcCoA), an essential intermediate at the junction of anabolic and catabolic pathways. AcsA undergoes a two-step reaction. In the first half reaction, AcsA combines acetate with ATP to form acetyl-adenylate (AcAMP) intermediate. In the second half reaction, it can then transfer the acetyl group from AcAMP to the sulfhydryl group of CoA, forming the product AcCoA. This chain is Acetyl-coenzyme A synthetase (acsA), found in Mycolicibacterium smegmatis (strain ATCC 700084 / mc(2)155) (Mycobacterium smegmatis).